The sequence spans 439 residues: Proline--tRNA ligase (439 aa).

Belongs to the class-II aminoacyl-tRNA synthetase family. ProS type 2 subfamily. As to quaternary structure, homodimer.

It localises to the cytoplasm. It catalyses the reaction tRNA(Pro) + L-proline + ATP = L-prolyl-tRNA(Pro) + AMP + diphosphate. Catalyzes the attachment of proline to tRNA(Pro) in a two-step reaction: proline is first activated by ATP to form Pro-AMP and then transferred to the acceptor end of tRNA(Pro). The polypeptide is Proline--tRNA ligase (Rhodopseudomonas palustris (strain BisB18)).